The chain runs to 560 residues: Protein tweety homolog 3 (560 aa).

The Extracellular segment spans residues 1 to 43 (MAAVVNYSPPWWVNLFHRLPHFNLQFQQTSSDFRPDDSDYQKA). The helical transmembrane segment at 44-64 (VLLLGAAALVCLALDLLFLLF) threads the bilayer. Residues 65–87 (YSFWLCCCRRKNHDSPNADCCCT) are Cytoplasmic-facing. The chain crosses the membrane as a helical span at residues 88–108 (AWCVIIATLVCSAGIAVGFYG). Over 109–212 (NGETCDGVTR…TEQYDWYRWL (104 aa)) the chain is Extracellular. Residues E111 and D114 each contribute to the Ca(2+) site. N127 and N145 each carry an N-linked (GlcNAc...) asparagine glycan. Residues 213–233 (GYLGLLLFDVIICLLVLVGLI) form a helical membrane-spanning segment. At 234 to 238 (RNSRS) the chain is on the cytoplasmic side. The chain crosses the membrane as a helical span at residues 239–259 (ILIGVCFLGVLTLVISWASLG). Residues 260-387 (LEFSFAVGAS…LTGLCYDGVE (128 aa)) lie on the Extracellular side of the membrane. Intrachain disulfides connect C272–C382 and C300–C367. A glycan (N-linked (GlcNAc...) asparagine) is linked at N352. A helical membrane pass occupies residues 388 to 408 (GLIYLVLFSFVTALMFSSIVC). Residues 409 to 560 (SVPHTWQSKR…AIHRPHSAIH (152 aa)) are Cytoplasmic-facing. 2 disordered regions span residues 415–435 (QSKR…GSRA) and 486–560 (TPRC…SAIH). Polar residues predominate over residues 539–549 (TSRSAPNSRPN).

Belongs to the tweety family. Homotetramer; disulfide-linked. Forms cis-homodimers in the presence of Ca(2+).

The protein localises to the cell membrane. It catalyses the reaction chloride(in) = chloride(out). The catalysed reaction is L-glutamate(out) = L-glutamate(in). Its function is as follows. May act as a calcium-independent, swelling-dependent volume-regulated anion channel (VRAC-swell) which plays a pivotal role in the process of regulatory volume decrease (RVD) in the brain through the efflux of anions like chloride and organic osmolytes like glutamate. Probable large-conductance Ca(2+)-activated chloride channel. The polypeptide is Protein tweety homolog 3 (ttyh3b) (Danio rerio (Zebrafish)).